The chain runs to 192 residues: Ubiquitin-conjugating enzyme E2 27 (192 aa).

Positions 2–150 (IDFSRIQKEL…ARYWTETFAK (149 aa)) constitute a UBC core domain. The active-site Glycyl thioester intermediate is Cys88. In terms of domain architecture, UBA spans 153 to 192 (SLEEKVKRLVEMGFGDAQVRSAIESSGGDENLALEKLCSA).

It belongs to the ubiquitin-conjugating enzyme family. Expressed in seeds, pistils, siliques, hypocotyls and leaves.

The catalysed reaction is S-ubiquitinyl-[E1 ubiquitin-activating enzyme]-L-cysteine + [E2 ubiquitin-conjugating enzyme]-L-cysteine = [E1 ubiquitin-activating enzyme]-L-cysteine + S-ubiquitinyl-[E2 ubiquitin-conjugating enzyme]-L-cysteine.. It functions in the pathway protein modification; protein ubiquitination. Accepts the ubiquitin from the E1 complex and catalyzes its covalent attachment to other proteins. This Arabidopsis thaliana (Mouse-ear cress) protein is Ubiquitin-conjugating enzyme E2 27 (UBC27).